We begin with the raw amino-acid sequence, 430 residues long: Serine--tRNA ligase (430 aa).

Threonine 237 to glutamate 239 is a binding site for L-serine. Arginine 268–glutamate 270 is an ATP binding site. L-serine is bound at residue glutamate 291. Glutamate 355 to serine 358 serves as a coordination point for ATP. Position 391 (serine 391) interacts with L-serine.

This sequence belongs to the class-II aminoacyl-tRNA synthetase family. Type-1 seryl-tRNA synthetase subfamily. As to quaternary structure, homodimer. The tRNA molecule binds across the dimer.

It is found in the cytoplasm. The catalysed reaction is tRNA(Ser) + L-serine + ATP = L-seryl-tRNA(Ser) + AMP + diphosphate + H(+). The enzyme catalyses tRNA(Sec) + L-serine + ATP = L-seryl-tRNA(Sec) + AMP + diphosphate + H(+). Its pathway is aminoacyl-tRNA biosynthesis; selenocysteinyl-tRNA(Sec) biosynthesis; L-seryl-tRNA(Sec) from L-serine and tRNA(Sec): step 1/1. In terms of biological role, catalyzes the attachment of serine to tRNA(Ser). Is also able to aminoacylate tRNA(Sec) with serine, to form the misacylated tRNA L-seryl-tRNA(Sec), which will be further converted into selenocysteinyl-tRNA(Sec). The chain is Serine--tRNA ligase from Salmonella schwarzengrund (strain CVM19633).